Reading from the N-terminus, the 602-residue chain is Protein indeterminate-domain 5, chloroplastic (602 aa).

Composition is skewed to low complexity over residues 1 to 10 and 21 to 30; these read MAASSSSAAS and HLLPPNSSAA. Residues 1-50 constitute a chloroplast transit peptide; the sequence is MAASSSSAASFFGVRQDDQSHLLPPNSSAAAPPPPPPHHQAPLPPLEAPP. Residues 1–65 are disordered; it reads MAASSSSAAS…NQPRTPNSDA (65 aa). The span at 31 to 48 shows a compositional bias: pro residues; sequence APPPPPPHHQAPLPPLEA. Thr-60 bears the Phosphothreonine mark. A Phosphoserine modification is found at Ser-71. 2 C2H2-type zinc fingers span residues 81-103 and 122-152; these read FICE…RRGH and YLCP…YRKH. Residues 157–180 form a C2H2-type 2; degenerate zinc finger; sequence WKCDKCSKRYAVQSDWKAHSKTCG. Zn(2+) contacts are provided by Cys-159, Cys-162, His-175, Cys-179, Cys-186, Cys-188, His-201, and Cys-205. Residues 184-207 form a CCHC-type 2; atypical zinc finger; it reads YRCDCGTLFSRRDSFITHRAFCDA. The SHR-binding stretch occupies residues 194 to 206; it reads RRDSFITHRAFCD. Disordered stretches follow at residues 443 to 467 and 537 to 602; these read KAAQ…NNAS and KSMS…HASF. Low complexity-rich tracts occupy residues 448–467, 546–560, and 570–579; these read GSTS…NNAS, QQQQ…QQQQ, and SSSDSADRSS.

As to quaternary structure, binds to RGA and SCL3 competitively. Highly expressed in leaf tissues.

It localises to the plastid. The protein resides in the chloroplast. Functionally, transcription factor acting as a positive regulator of the starch synthase SS4. Controls chloroplast development and starch granule formation. Binds DNA via its zinc fingers. Recognizes and binds to SCL3 promoter sequence 5'-AGACAA-3' to promote its expression when in complex with RGA. This is Protein indeterminate-domain 5, chloroplastic from Arabidopsis thaliana (Mouse-ear cress).